Reading from the N-terminus, the 1052-residue chain is P3N-PIPO polyprotein (1052 aa).

The Peptidase S30 domain maps to 219–362 (KMSDQGVDML…KTMSLKIVHF (144 aa)). Residues His-270, Asp-279, and Ser-313 each act as for P1 proteinase activity in the active site. The Involved in interaction with stylet and aphid transmission motif lies at 414–417 (KITC). Residues 672–674 (PTK) carry the Involved in virions binding and aphid transmission motif. Positions 698–820 (MYIAKEGYCY…ESSLKHYRVG (123 aa)) constitute a Peptidase C6 domain. Residues Cys-706 and His-779 each act as for helper component proteinase activity in the active site.

The protein belongs to the potyviridae P3N-PIPO polyprotein family. In terms of assembly, interacts (via PIPO domain) with host PCaP1 protein; this interaction may help to anchor the movement complex to the plasma membrane from which the complex could move to the plasmodesmata. Post-translationally, potyviral RNA is expressed as two polyproteins which undergo post-translational proteolytic processing. Genome polyprotein is processed by NIa-pro, P1 and HC-pro proteinases resulting in the production of at least ten individual proteins. P3N-PIPO is cleaved by P1 and HC-pro proteinases resulting in the production of three individual proteins. The P1 proteinase and the HC-pro cleave only their respective C-termini autocatalytically.

It is found in the host cell junction. Its subcellular location is the host plasmodesma. The catalysed reaction is Hydrolyzes a Gly-|-Gly bond at its own C-terminus, commonly in the sequence -Tyr-Xaa-Val-Gly-|-Gly, in the processing of the potyviral polyprotein.. In terms of biological role, required for aphid transmission and also has proteolytic activity. Only cleaves a Gly-Gly dipeptide at its own C-terminus. Interacts with virions and aphid stylets. Acts as a suppressor of RNA-mediated gene silencing, also known as post-transcriptional gene silencing (PTGS), a mechanism of plant viral defense that limits the accumulation of viral RNAs. May have RNA-binding activity. Allows efficient cell to cell propagation, by bypassing the host cell wall barrier. Transports viral genome to neighboring plant cells directly through plasmosdesmata, without any budding. This chain is P3N-PIPO polyprotein, found in Turnip mosaic virus (strain Quebec) (TuMV).